The primary structure comprises 1233 residues: Pesticidal crystal protein Cry1Bc (1233 aa).

Belongs to the delta endotoxin family.

In terms of biological role, promotes colloidosmotic lysis by binding to the midgut epithelial cells of insects. The sequence is that of Pesticidal crystal protein Cry1Bc (cry1Bc) from Bacillus thuringiensis subsp. morrisoni.